The primary structure comprises 453 residues: Nuclear distribution protein nudF-2 (453 aa).

The LisH domain maps to 9 to 41 (QADELHRALIAYLTAANLPNTAAALREELNLSE). The stretch at 62–88 (SVVRLQKKIMDLESRNHILQSELDNAT) forms a coiled coil. The disordered stretch occupies residues 84–107 (LDNATPTSRQNKDPVAWLPRAPPR). WD repeat units follow at residues 112-153 (SHRD…RTIK), 155-195 (HTKA…KNIR), 199-239 (GHDH…CVKT), 242-281 (GHAEWVRDVCPSLDGKYILSTSDDYTSRLWDVTITNPEPK), 286-345 (GHEH…IKTL), 347-386 (GHDNWVRGLVFHPGGKYLLSVSDDKTLRCWDLTQEGKCVK), and 391-449 (AHGH…LNVR).

Belongs to the WD repeat LIS1/nudF family. Self-associates. Interacts with ro-11/nde1 and dynein.

Its subcellular location is the cytoplasm. The protein resides in the cytoskeleton. It is found in the spindle pole. Functionally, positively regulates the activity of the minus-end directed microtubule motor protein dynein. May enhance dynein-mediated microtubule sliding by targeting dynein to the microtubule plus end. Required for nuclear migration during vegetative growth as well as development. Required for retrograde early endosome (EE) transport from the hyphal tip. Required for localization of dynein to the mitotic spindle poles. Recruits additional proteins to the dynein complex at SPBs. This chain is Nuclear distribution protein nudF-2 (nmp-1), found in Neurospora crassa (strain ATCC 24698 / 74-OR23-1A / CBS 708.71 / DSM 1257 / FGSC 987).